We begin with the raw amino-acid sequence, 117 residues long: Immunoglobulin heavy variable 1-45 (117 aa).

The N-terminal stretch at 1 to 19 is a signal peptide; the sequence is MDWTWRILFLVAAVTDAYS. A framework-1 region spans residues 20–44; sequence QMQLVQSGAEVKKTGSSVKVSCKAS. The Ig-like domain maps to 20–117; the sequence is QMQLVQSGAE…EDTAMYYCAR (98 aa). C41 and C115 are joined by a disulfide. Residues 45-52 are complementarity-determining-1; that stretch reads GYTFTYRY. Residues 53-69 are framework-2; the sequence is LHWVRQAPGQALEWMGW. The complementarity-determining-2 stretch occupies residues 70 to 77; sequence ITPFNGNT. Residues 78–115 are framework-3; that stretch reads NYAQKFQDRVTITRDRSMSTAYMELSSLRSEDTAMYYC. Positions 116–117 are complementarity-determining-3; it reads AR.

Immunoglobulins are composed of two identical heavy chains and two identical light chains; disulfide-linked.

The protein resides in the secreted. It is found in the cell membrane. Functionally, v region of the variable domain of immunoglobulin heavy chains that participates in the antigen recognition. Immunoglobulins, also known as antibodies, are membrane-bound or secreted glycoproteins produced by B lymphocytes. In the recognition phase of humoral immunity, the membrane-bound immunoglobulins serve as receptors which, upon binding of a specific antigen, trigger the clonal expansion and differentiation of B lymphocytes into immunoglobulins-secreting plasma cells. Secreted immunoglobulins mediate the effector phase of humoral immunity, which results in the elimination of bound antigens. The antigen binding site is formed by the variable domain of one heavy chain, together with that of its associated light chain. Thus, each immunoglobulin has two antigen binding sites with remarkable affinity for a particular antigen. The variable domains are assembled by a process called V-(D)-J rearrangement and can then be subjected to somatic hypermutations which, after exposure to antigen and selection, allow affinity maturation for a particular antigen. The protein is Immunoglobulin heavy variable 1-45 of Homo sapiens (Human).